The following is a 148-amino-acid chain: Hemoglobin subunit beta (148 aa).

In terms of domain architecture, Globin spans 3–148; that stretch reads DWTDAERSAI…VVSALGRQYH (146 aa). 2 residues coordinate heme b: H64 and H93.

It belongs to the globin family. Heterotetramer of two alpha chains and two beta chains. As to expression, red blood cells.

In terms of biological role, involved in oxygen transport from gills to the various peripheral tissues. The chain is Hemoglobin subunit beta (hbb) from Salmo salar (Atlantic salmon).